The sequence spans 536 residues: uncharacterized protein (536 aa).

The segment at 71 to 98 adopts an SWIM-type zinc-finger fold; the sequence is LFVIVKSGCSCPSGRICRHMLAVFLYVY. Residues 482 to 528 are a coiled coil; the sequence is YKEAARYLKKLRTLYKKAKKQKVWERYIQLLSSHYKRLRALQEELQK.

This is an uncharacterized protein from Bacillus subtilis (strain 168).